Consider the following 567-residue polypeptide: Dihydrolipoyl dehydrogenase 2, chloroplastic (567 aa).

Residues 1–67 (MQSVLSLSFS…HIQSRRIEVS (67 aa)) constitute a chloroplast transit peptide. FAD contacts are provided by residues 114–122 (EGDVVGGTC), Lys-131, Gly-197, and 221–223 (TGS). Cys-122 and Cys-127 are joined by a disulfide. NAD(+) is bound by residues 258-265 (GSGYIGLE), Glu-281, and Gly-354. Residues Asp-400 and 406–409 (MLAH) each bind FAD. His-536 acts as the Proton acceptor in catalysis.

The protein belongs to the class-I pyridine nucleotide-disulfide oxidoreductase family. Homodimer. Part of the plastidial pyruvate dehydrogenase complex (PDC) containing multiple copies of three enzymatic components: pyruvate dehydrogenase (E1), dihydrolipoamide acetyltransferase (E2) and lipoamide dehydrogenase (E3). FAD serves as cofactor. Expressed mainly in flower buds and immature siliques, and to a lesser extent in flowers.

It is found in the plastid. It localises to the chloroplast stroma. The enzyme catalyses N(6)-[(R)-dihydrolipoyl]-L-lysyl-[protein] + NAD(+) = N(6)-[(R)-lipoyl]-L-lysyl-[protein] + NADH + H(+). Its function is as follows. Lipoamide dehydrogenase is a component of the plastidial pyruvate dehydrogenase complex (PDC). This chain is Dihydrolipoyl dehydrogenase 2, chloroplastic (LPD2), found in Arabidopsis thaliana (Mouse-ear cress).